The sequence spans 1580 residues: Pentafunctional AROM polypeptide (1580 aa).

The segment at Met-1–Asn-381 is 3-dehydroquinate synthase. NAD(+)-binding positions include Asp-44–Thr-46, Glu-81–Lys-84, Gly-114–Val-116, and Asp-119. Residue Arg-130 participates in 7-phospho-2-dehydro-3-deoxy-D-arabino-heptonate binding. Thr-139–Thr-140 provides a ligand contact to NAD(+). Residues Asp-146 and Lys-152 each contribute to the 7-phospho-2-dehydro-3-deoxy-D-arabino-heptonate site. NAD(+) is bound at residue Lys-161. Position 162 (Asn-162) interacts with 7-phospho-2-dehydro-3-deoxy-D-arabino-heptonate. NAD(+) is bound by residues Phe-179–Thr-182 and Asn-190. Glu-194 lines the Zn(2+) pocket. Lys-247 is a binding site for 7-phospho-2-dehydro-3-deoxy-D-arabino-heptonate. Glu-257 (proton acceptor; for 3-dehydroquinate synthase activity) is an active-site residue. Residues Arg-261–Asn-265 and His-268 each bind 7-phospho-2-dehydro-3-deoxy-D-arabino-heptonate. His-268 is a binding site for Zn(2+). His-272 functions as the Proton acceptor; for 3-dehydroquinate synthase activity in the catalytic mechanism. His-284 and Lys-353 together coordinate 7-phospho-2-dehydro-3-deoxy-D-arabino-heptonate. His-284 serves as a coordination point for Zn(2+). The segment at Val-394–Ala-838 is EPSP synthase. The active-site For EPSP synthase activity is Cys-820. Positions Ala-857–Ser-1048 are shikimate kinase. Gly-863–Thr-870 serves as a coordination point for ATP. Positions Leu-1049–Glu-1269 are 3-dehydroquinase. Catalysis depends on His-1172, which acts as the Proton acceptor; for 3-dehydroquinate dehydratase activity. The active-site Schiff-base intermediate with substrate; for 3-dehydroquinate dehydratase activity is the Lys-1200. The interval Ser-1282–Ile-1580 is shikimate dehydrogenase.

It in the N-terminal section; belongs to the sugar phosphate cyclases superfamily. Dehydroquinate synthase family. This sequence in the 2nd section; belongs to the EPSP synthase family. The protein in the 3rd section; belongs to the shikimate kinase family. In the 4th section; belongs to the type-I 3-dehydroquinase family. It in the C-terminal section; belongs to the shikimate dehydrogenase family. In terms of assembly, homodimer. Zn(2+) is required as a cofactor.

The protein resides in the cytoplasm. It carries out the reaction 7-phospho-2-dehydro-3-deoxy-D-arabino-heptonate = 3-dehydroquinate + phosphate. The enzyme catalyses 3-dehydroquinate = 3-dehydroshikimate + H2O. The catalysed reaction is shikimate + NADP(+) = 3-dehydroshikimate + NADPH + H(+). It catalyses the reaction shikimate + ATP = 3-phosphoshikimate + ADP + H(+). It carries out the reaction 3-phosphoshikimate + phosphoenolpyruvate = 5-O-(1-carboxyvinyl)-3-phosphoshikimate + phosphate. It participates in metabolic intermediate biosynthesis; chorismate biosynthesis; chorismate from D-erythrose 4-phosphate and phosphoenolpyruvate: step 2/7. It functions in the pathway metabolic intermediate biosynthesis; chorismate biosynthesis; chorismate from D-erythrose 4-phosphate and phosphoenolpyruvate: step 3/7. The protein operates within metabolic intermediate biosynthesis; chorismate biosynthesis; chorismate from D-erythrose 4-phosphate and phosphoenolpyruvate: step 4/7. Its pathway is metabolic intermediate biosynthesis; chorismate biosynthesis; chorismate from D-erythrose 4-phosphate and phosphoenolpyruvate: step 5/7. It participates in metabolic intermediate biosynthesis; chorismate biosynthesis; chorismate from D-erythrose 4-phosphate and phosphoenolpyruvate: step 6/7. Functionally, the AROM polypeptide catalyzes 5 consecutive enzymatic reactions in prechorismate polyaromatic amino acid biosynthesis. The chain is Pentafunctional AROM polypeptide from Uncinocarpus reesii (strain UAMH 1704).